A 56-amino-acid polypeptide reads, in one-letter code: Large ribosomal subunit protein bL32 (56 aa).

The segment covering 1 to 16 (MAVQKSKKSRSMRGMR) has biased composition (basic residues). The interval 1–22 (MAVQKSKKSRSMRGMRRSHDAL) is disordered.

This sequence belongs to the bacterial ribosomal protein bL32 family.

In Aliivibrio salmonicida (strain LFI1238) (Vibrio salmonicida (strain LFI1238)), this protein is Large ribosomal subunit protein bL32.